Consider the following 443-residue polypeptide: ATP-dependent protease ATPase subunit HslU (443 aa).

Residues Ile20, 62–67 (GVGKTE), Asp255, Glu321, and Arg393 each bind ATP.

The protein belongs to the ClpX chaperone family. HslU subfamily. A double ring-shaped homohexamer of HslV is capped on each side by a ring-shaped HslU homohexamer. The assembly of the HslU/HslV complex is dependent on binding of ATP.

It localises to the cytoplasm. ATPase subunit of a proteasome-like degradation complex; this subunit has chaperone activity. The binding of ATP and its subsequent hydrolysis by HslU are essential for unfolding of protein substrates subsequently hydrolyzed by HslV. HslU recognizes the N-terminal part of its protein substrates and unfolds these before they are guided to HslV for hydrolysis. This chain is ATP-dependent protease ATPase subunit HslU, found in Helicobacter pylori (strain ATCC 700392 / 26695) (Campylobacter pylori).